The following is a 79-amino-acid chain: Cytochrome c oxidase subunit 7A1, mitochondrial (79 aa).

Residues 1–21 (MQALRVSQALIRSFSSTARNR) constitute a mitochondrion transit peptide. Topologically, residues 22-46 (FQNRVREKQKLFQEDNDIPLYLKGG) are mitochondrial matrix. The helical transmembrane segment at 47 to 75 (IVDNILYRVTMTLCLGGTVYSLYSLGWAS) threads the bilayer. The Mitochondrial intermembrane portion of the chain corresponds to 76-79 (FPRN).

Belongs to the cytochrome c oxidase VIIa family. In terms of assembly, component of the complex IV (CIV, cytochrome c oxidase), a multisubunit enzyme composed of 14 subunits. The complex is composed of a catalytic core of 3 subunits MT-CO1, MT-CO2 and MT-CO3, encoded in the mitochondrial DNA, and 11 supernumerary subunits COX4I1 (or COX4I2), COX5A, COX5B, COX6A2 (or COX6A1), COX6B1 (or COX6B2), COX6C, COX7A1 (or COX7A2), COX7B, COX7C, COX8B and NDUFA4, which are encoded in the nuclear genome. The complex exists as a monomer or a dimer and forms supercomplexes (SCs) in the inner mitochondrial membrane with NADH-ubiquinone oxidoreductase (complex I, CI) and ubiquinol-cytochrome c oxidoreductase (cytochrome b-c1 complex, complex III, CIII), resulting in different assemblies (supercomplex SCI(1)III(2)IV(1) and megacomplex MCI(2)III(2)IV(2)).

It localises to the mitochondrion inner membrane. It functions in the pathway energy metabolism; oxidative phosphorylation. Component of the mitochondrial respiratory complex IV (CIV, also named cytochrome c oxidase complex), the last enzyme in the mitochondrial electron transport chain which drives oxidative phosphorylation. The CIV complex is the component of the respiratory chain that catalyzes the reduction of oxygen to water. Acts as an assembly factor that specifically drives the homodimerization of CIV complexes, mediating the formation of mitochondrial respiratory supercomplexes (respirasomes) containing two CIV: supercomplxes with two molecules of CIV show improved activity. Despite being highly expressed in brown adipose tissue, not required for thermogenesis. In Homo sapiens (Human), this protein is Cytochrome c oxidase subunit 7A1, mitochondrial (COX7A1).